Consider the following 386-residue polypeptide: Antilisterial bacteriocin subtilosin biosynthesis protein AlbE (386 aa).

Its function is as follows. Involved in the production of the bacteriocin subtilosin. The sequence is that of Antilisterial bacteriocin subtilosin biosynthesis protein AlbE (albE) from Bacillus subtilis.